A 45-amino-acid polypeptide reads, in one-letter code: uncharacterized protein (45 aa).

This is an uncharacterized protein from Bacillus subtilis (strain 168).